A 68-amino-acid chain; its full sequence is Copper transport protein ATOX1 (68 aa).

Positions 1-63 constitute an HMA domain; that stretch reads MPKHEFSVDM…TLGKTGKAVS (63 aa). Cu cation contacts are provided by cysteine 12 and cysteine 15. Serine 47 carries the phosphoserine modification. At lysine 60 the chain carries N6-acetyllysine.

Belongs to the ATX1 family. In terms of assembly, homodimer. Interacts with ATP7B. Interacts with ATP7A. Interacts (via dimer form) with SLC31A1 (via C-terminal domain); this interaction improves ATOX1 stability and controls intracellular Cu(I) levels.

Binds and deliver cytosolic copper to the copper ATPase proteins. May be important in cellular antioxidant defense. In Bos taurus (Bovine), this protein is Copper transport protein ATOX1.